The chain runs to 168 residues: MKLILRADVENLGSLGDVVDVKPGYGRNFLLPQGLAMVASQANLKVFEQERKKLQAHMDALRAEAQDMQARLEALDVVITMHVGDNDKLYGSVTTTIIGDAIAALGVDVDRRRILMDAPIRTLGEHPVRVRLHPSVIALVPVKVVSDHQSFEEEPAPEAPAEEAEAAE.

Positions 149 to 168 (QSFEEEPAPEAPAEEAEAAE) are disordered. Over residues 152–168 (EEEPAPEAPAEEAEAAE) the composition is skewed to acidic residues.

The protein belongs to the bacterial ribosomal protein bL9 family.

Binds to the 23S rRNA. This is Large ribosomal subunit protein bL9 from Desulfovibrio desulfuricans (strain ATCC 27774 / DSM 6949 / MB).